A 547-amino-acid polypeptide reads, in one-letter code: Chaperonin GroEL (547 aa).

ATP contacts are provided by residues 30–33 (TLGP), lysine 51, 87–91 (DGTTT), glycine 415, 479–481 (NAA), and aspartate 495.

This sequence belongs to the chaperonin (HSP60) family. As to quaternary structure, forms a cylinder of 14 subunits composed of two heptameric rings stacked back-to-back. Interacts with the co-chaperonin GroES.

The protein localises to the cytoplasm. The catalysed reaction is ATP + H2O + a folded polypeptide = ADP + phosphate + an unfolded polypeptide.. Its function is as follows. Together with its co-chaperonin GroES, plays an essential role in assisting protein folding. The GroEL-GroES system forms a nano-cage that allows encapsulation of the non-native substrate proteins and provides a physical environment optimized to promote and accelerate protein folding. In Acinetobacter baumannii (strain ACICU), this protein is Chaperonin GroEL.